A 478-amino-acid chain; its full sequence is Aspartate ammonia-lyase (478 aa).

Residues Thr-109, Ser-148, Thr-149, Asn-150, and Thr-195 each coordinate L-aspartate. The tract at residues 326 to 335 (GSSIMPGKVN) is SS loop. Catalysis depends on Ser-327, which acts as the Proton acceptor. L-aspartate-binding residues include Ser-328 and Lys-333.

The protein belongs to the class-II fumarase/aspartase family. Aspartase subfamily. Homotetramer.

The catalysed reaction is L-aspartate = fumarate + NH4(+). In terms of biological role, catalyzes the reversible conversion of L-aspartate to fumarate and ammonia. The protein is Aspartate ammonia-lyase of Pseudomonas fluorescens.